The chain runs to 445 residues: FAD-dependent monooxygenase sorC (445 aa).

The helical transmembrane segment at 8-28 (PFEVAIVGGGITGLALAVGLL) threads the bilayer. An N-linked (GlcNAc...) asparagine glycan is attached at asparagine 31. 2 residues coordinate FAD: glutamate 38 and arginine 119. Residue arginine 201 is part of the active site. FAD-binding residues include aspartate 323 and alanine 336. Residue asparagine 358 is glycosylated (N-linked (GlcNAc...) asparagine).

The protein belongs to the paxM FAD-dependent monooxygenase family. FAD serves as cofactor.

Its subcellular location is the membrane. Its pathway is secondary metabolite biosynthesis. In terms of biological role, FAD-dependent monooxygenase; part of the gene cluster that mediates the biosynthesis of sorbicillinoids, a diverse group of yellow secondary metabolites that restrict growth of competing pathogenic fungi but not of bacteria. Sorbicillinoids biosynthesis requires the action of two PKSs. SorA iteratively combines three acetyl units and the growing chain is modified by the ketoacyl reductase subunit, and optional by the enoyl reductase subunit in the second cycle. The polyketide is then handed over to the PKS SorB, which adds three more acetyl units, and two methyl groups. SorB releases an aldehyde, which undergoes spontaneous cyclization resulting in the formation of sorbicillin or 2',3'-dihydrosorbicillin. The monooxygenase sorC oxidizes sorbicillin and 2',3'-dihydrosorbicillin to 2',3'-dihydrosorbicillinol and sorbicillinol, respectively. The oxidoreductase sorD further converts sorbicillinol into oxosorbicillinol. Sorbicillinol is the building block for the other sorbicillinoids such as disorbicillinol, bisvertinolon, and dihydrobisvertinolone. In Penicillium rubens (strain ATCC 28089 / DSM 1075 / NRRL 1951 / Wisconsin 54-1255) (Penicillium chrysogenum), this protein is FAD-dependent monooxygenase sorC.